Here is a 447-residue protein sequence, read N- to C-terminus: Putative short-chain fatty acid transporter (447 aa).

Helical transmembrane passes span 17-37, 49-69, 98-118, 136-156, 188-208, 252-272, 284-304, 321-341, 359-379, 402-422, and 427-447; these read LPDPLIFAVLLTFVTFICAWG, MWGNGFWNLLGFGMQMALIVV, VVLVTFMGSIACIINWGFGLV, YALLIACAYIAFMTWGGGFSG, TLFSGYNIFITLSLVICLPFI, FLAYTIGALGYSYLGMYFYKN, IFLITGIVLHGSPMAYMRAII, AGVQLMMEHSGLGGLITEFFI, FINFAVPSGGGHWVIQGPFVI, WMNMAQPFWALPALGIAGLGV, and GFCMTALIFTAPIFIIGLYFL.

The protein localises to the cell inner membrane. In terms of biological role, may be responsible for the uptake of short-chain fatty acids. This is Putative short-chain fatty acid transporter (atoE) from Haemophilus influenzae (strain ATCC 51907 / DSM 11121 / KW20 / Rd).